We begin with the raw amino-acid sequence, 220 residues long: 7-cyano-7-deazaguanine synthase (220 aa).

ATP is bound at residue 10-20; it reads FSGGQDSTTCL. Residues cysteine 186, cysteine 195, cysteine 198, and cysteine 201 each coordinate Zn(2+).

This sequence belongs to the QueC family. In terms of assembly, homodimer. It depends on Zn(2+) as a cofactor.

The catalysed reaction is 7-carboxy-7-deazaguanine + NH4(+) + ATP = 7-cyano-7-deazaguanine + ADP + phosphate + H2O + H(+). It functions in the pathway purine metabolism; 7-cyano-7-deazaguanine biosynthesis. Functionally, catalyzes the ATP-dependent conversion of 7-carboxy-7-deazaguanine (CDG) to 7-cyano-7-deazaguanine (preQ(0)). The chain is 7-cyano-7-deazaguanine synthase from Bacillus cereus (strain ATCC 14579 / DSM 31 / CCUG 7414 / JCM 2152 / NBRC 15305 / NCIMB 9373 / NCTC 2599 / NRRL B-3711).